A 188-amino-acid chain; its full sequence is ATP synthase subunit b (188 aa).

A helical transmembrane segment spans residues 21-41 (ILPHLGELIVGIIFAIIIYAV).

The protein belongs to the ATPase B chain family. F-type ATPases have 2 components, F(1) - the catalytic core - and F(0) - the membrane proton channel. F(1) has five subunits: alpha(3), beta(3), gamma(1), delta(1), epsilon(1). F(0) has three main subunits: a(1), b(2) and c(10-14). The alpha and beta chains form an alternating ring which encloses part of the gamma chain. F(1) is attached to F(0) by a central stalk formed by the gamma and epsilon chains, while a peripheral stalk is formed by the delta and b chains.

It localises to the cell membrane. F(1)F(0) ATP synthase produces ATP from ADP in the presence of a proton or sodium gradient. F-type ATPases consist of two structural domains, F(1) containing the extramembraneous catalytic core and F(0) containing the membrane proton channel, linked together by a central stalk and a peripheral stalk. During catalysis, ATP synthesis in the catalytic domain of F(1) is coupled via a rotary mechanism of the central stalk subunits to proton translocation. In terms of biological role, component of the F(0) channel, it forms part of the peripheral stalk, linking F(1) to F(0). This Kineococcus radiotolerans (strain ATCC BAA-149 / DSM 14245 / SRS30216) protein is ATP synthase subunit b.